Here is a 545-residue protein sequence, read N- to C-terminus: Phenylalanine--tRNA ligase beta subunit (545 aa).

One can recognise a B5 domain in the interval 268-343 (FLHKIQNVRE…MSIGYNNLEP (76 aa)). Mg(2+) is bound by residues Asp321, Asp327, Glu330, and Asp331.

The protein belongs to the phenylalanyl-tRNA synthetase beta subunit family. Type 2 subfamily. In terms of assembly, tetramer of two alpha and two beta subunits. Mg(2+) serves as cofactor.

The protein resides in the cytoplasm. The catalysed reaction is tRNA(Phe) + L-phenylalanine + ATP = L-phenylalanyl-tRNA(Phe) + AMP + diphosphate + H(+). The chain is Phenylalanine--tRNA ligase beta subunit from Saccharolobus islandicus (strain M.16.27) (Sulfolobus islandicus).